The following is a 460-amino-acid chain: MKISFIEPAILLNAFAMTLTIPLTAQYVYRRIWEETGNYTFASNSNGSECDQNKSSSIFAFREEVQKKASLFNLQVEMSALIPGLVSTFMLLASSDNHGRKLPMVLSSLGSLGTNTWLCMMSYFDLPLQLLIASTFIGALFGNYTTFWGACFAYIVDQQKEYKHRIIRIAILDFMLGVVTGLTGLSSGYFIRELGFVWSYFITAMVLIVNLAYILFFLNDPIKESSSQIVTMSCIESLKDLFYRTYMLFKNGSSKRQALLCLLIFTLVIYFFVIIGISPIFTLYELGPPLCWNEVYIGYGSALGSVSFLSSFLGIWLFSYCLKDIHIAYIGIFTTMVGMTLAAFTRTTLMMFLVRIPFIFTIMPLSVLRSMLSKVVHSTEQGALFACIAFLETLAGVTSTSAYSGIYSATVAWYPGFIFLLSAGLLVLPAISLCCVKSIGWEEGSYTLLVHEEPSEHTSD.

The signal sequence occupies residues Met-1–Ala-25. Over Gln-26–Asn-73 the chain is Extracellular. N-linked (GlcNAc...) asparagine glycosylation is found at Asn-38, Asn-46, and Asn-53. Residues Leu-74–Ser-94 form a helical membrane-spanning segment. Residues Ser-95 to Ser-111 lie on the Cytoplasmic side of the membrane. The chain crosses the membrane as a helical span at residues Leu-112–Ile-132. The Extracellular segment spans residues Ala-133–Thr-135. Residues Phe-136–Val-156 traverse the membrane as a helical segment. Residues Asp-157–Ala-170 are Cytoplasmic-facing. A helical transmembrane segment spans residues Ile-171 to Ile-191. The Extracellular segment spans residues Arg-192–Gly-195. A helical transmembrane segment spans residues Phe-196–Phe-216. The Cytoplasmic segment spans residues Phe-217–Gln-257. Residues Ala-258–Ser-278 traverse the membrane as a helical segment. Over Pro-279–Ser-301 the chain is Extracellular. Residues Ala-302 to Leu-322 form a helical membrane-spanning segment. Residues Lys-323–Asp-324 lie on the Cytoplasmic side of the membrane. The chain crosses the membrane as a helical span at residues Ile-325 to Thr-345. The Extracellular segment spans residues Arg-346–Thr-347. The helical transmembrane segment at Thr-348–Leu-368 threads the bilayer. The Cytoplasmic segment spans residues Arg-369–Gln-381. The chain crosses the membrane as a helical span at residues Gly-382–Ala-402. Residues Tyr-403–Thr-410 lie on the Extracellular side of the membrane. The chain crosses the membrane as a helical span at residues Val-411–Ile-431. Residues Ser-432–Asp-460 are Cytoplasmic-facing. The short motif at Tyr-446 to Leu-449 is the Tyrosine-based lysosomal-sorting motif element.

Belongs to the major facilitator superfamily. SLC46A family. Expressed in liver, kidney, small intestine and colon.

It localises to the lysosome membrane. It catalyses the reaction estrone 3-sulfate(out) + n H(+)(out) = estrone 3-sulfate(in) + n H(+)(in). It carries out the reaction 25-hydroxyvitamin D3 sulfate(out) + n H(+)(out) = 25-hydroxyvitamin D3 sulfate(in) + n H(+)(in). The catalysed reaction is cholate(out) + n H(+)(out) = cholate(in) + n H(+)(in). The enzyme catalyses glycocholate(out) + n H(+)(out) = glycocholate(in) + n H(+)(in). It catalyses the reaction taurocholate(out) + n H(+)(out) = taurocholate(in) + n H(+)(in). It carries out the reaction dehydroepiandrosterone 3-sulfate(out) + n H(+)(out) = dehydroepiandrosterone 3-sulfate(in) + n H(+)(in). The catalysed reaction is N-acetyl-D-muramoyl-L-alanyl-D-isoglutamine(out) + n H(+)(out) = N-acetyl-D-muramoyl-L-alanyl-D-isoglutamine(in) + n H(+)(in). The enzyme catalyses 2',3'-cGAMP(out) + n H(+)(out) = 2',3'-cGAMP(in) + n H(+)(in). Its function is as follows. Lysosomal proton-coupled steroid conjugate and bile acid transporter. Preferentially recognizes lipophilic steroid conjugates or bile acis as endogenous substrates and seems to mediate escape from lysosomes to the cytoplasm. Modulates hepatic cytosolic copper homeostasis, maybe acting as a lysosomal copper transporter and sequestering copper ions in the lysosome. Delivers pathogen-associated molecular patterns to cytosolic pattern recognition receptors as part of the innate immune response to microbes. Selectively transports bacterial muramyl dipeptide (MDP) into the cytosol for recognition by NOD2, triggering inflammatory responses. Likely acts as a redundant importer of cyclic GMP-AMP dinucleotides (cGAMPs) in monocyte and macrophage cell lineages. The transport mechanism, its electrogenicity and stoichiometry remain to be elucidated. The polypeptide is Lysosomal proton-coupled steroid conjugate and bile acid symporter SLC46A3 (Slc46a3) (Mus musculus (Mouse)).